Consider the following 388-residue polypeptide: Chorismate synthase (388 aa).

Positions 39 and 45 each coordinate NADP(+). FMN-binding positions include 132–134 (RSS), 251–252 (NA), glycine 296, 311–315 (KPIPT), and arginine 337.

The protein belongs to the chorismate synthase family. Homotetramer. FMNH2 is required as a cofactor.

It catalyses the reaction 5-O-(1-carboxyvinyl)-3-phosphoshikimate = chorismate + phosphate. The protein operates within metabolic intermediate biosynthesis; chorismate biosynthesis; chorismate from D-erythrose 4-phosphate and phosphoenolpyruvate: step 7/7. Functionally, catalyzes the anti-1,4-elimination of the C-3 phosphate and the C-6 proR hydrogen from 5-enolpyruvylshikimate-3-phosphate (EPSP) to yield chorismate, which is the branch point compound that serves as the starting substrate for the three terminal pathways of aromatic amino acid biosynthesis. This reaction introduces a second double bond into the aromatic ring system. This chain is Chorismate synthase, found in Staphylococcus aureus (strain Mu50 / ATCC 700699).